Consider the following 912-residue polypeptide: Multiple C2 and transmembrane domain-containing protein (912 aa).

The segment covering 1 to 33 has biased composition (low complexity); it reads MSRIQYVDQVDQVELDQQQQPGSSSTVSGSTPP. Disordered regions lie at residues 1 to 80 and 145 to 165; these read MSRI…KRAK and SSEG…IGGS. Over residues 38-49 the composition is skewed to polar residues; that stretch reads PHGSPSLQQSQR. C2 domains lie at 218–337, 371–493, and 522–637; these read QANE…HLQL, RNSK…HLML, and ERYK…TLKD. The Ca(2+) site is built by aspartate 252, aspartate 258, aspartate 305, aspartate 307, and aspartate 313. The Ca(2+) site is built by aspartate 553, aspartate 559, aspartate 605, and aspartate 607. The next 2 membrane-spanning stretches (helical) occupy residues 729–749 and 826–846; these read IVAC…LIIL and LTWL…FVPL. The segment at 887–912 is disordered; that stretch reads NQYRELPPSAPTDQTRNNPKKKLKGS.

Requires Ca(2+) as cofactor. As to expression, motor neurons (at protein level).

The protein resides in the endoplasmic reticulum membrane. In terms of biological role, calcium sensor which is essential for the stabilization of normal baseline neurotransmitter release and for the induction and long-term maintenance of presynaptic homeostatic plasticity. This Drosophila melanogaster (Fruit fly) protein is Multiple C2 and transmembrane domain-containing protein.